The following is a 963-amino-acid chain: Bifunctional glutamine synthetase adenylyltransferase/adenylyl-removing enzyme (963 aa).

Residues 1-453 (MLTTLIPLSQ…IFNEIIGEEE (453 aa)) form an adenylyl removase region. The interval 461 to 963 (VNEKLAEWKD…VREMWQRLLA (503 aa)) is adenylyl transferase.

Belongs to the GlnE family. Mg(2+) serves as cofactor.

The enzyme catalyses [glutamine synthetase]-O(4)-(5'-adenylyl)-L-tyrosine + phosphate = [glutamine synthetase]-L-tyrosine + ADP. It carries out the reaction [glutamine synthetase]-L-tyrosine + ATP = [glutamine synthetase]-O(4)-(5'-adenylyl)-L-tyrosine + diphosphate. Functionally, involved in the regulation of glutamine synthetase GlnA, a key enzyme in the process to assimilate ammonia. When cellular nitrogen levels are high, the C-terminal adenylyl transferase (AT) inactivates GlnA by covalent transfer of an adenylyl group from ATP to specific tyrosine residue of GlnA, thus reducing its activity. Conversely, when nitrogen levels are low, the N-terminal adenylyl removase (AR) activates GlnA by removing the adenylyl group by phosphorolysis, increasing its activity. The regulatory region of GlnE binds the signal transduction protein PII (GlnB) which indicates the nitrogen status of the cell. In Mannheimia haemolytica (Pasteurella haemolytica), this protein is Bifunctional glutamine synthetase adenylyltransferase/adenylyl-removing enzyme.